The sequence spans 574 residues: Septation ring formation regulator EzrA (574 aa).

At 1–7 the chain is on the extracellular side; it reads MSNGLII. A helical transmembrane segment spans residues 8-26; it reads LIIVIAVALILAYVAAVVL. The Cytoplasmic portion of the chain corresponds to 27–574; that stretch reads RKRNETLLDS…YEKTRENIRF (548 aa). Coiled-coil stretches lie at residues 104-141, 267-424, and 456-524; these read LKAK…EAKN, NITQ…QKVN, and ASDH…SIQE.

Belongs to the EzrA family.

The protein resides in the cell membrane. In terms of biological role, negative regulator of FtsZ ring formation; modulates the frequency and position of FtsZ ring formation. Inhibits FtsZ ring formation at polar sites. Interacts either with FtsZ or with one of its binding partners to promote depolymerization. The polypeptide is Septation ring formation regulator EzrA (Streptococcus gordonii (strain Challis / ATCC 35105 / BCRC 15272 / CH1 / DL1 / V288)).